The following is a 669-amino-acid chain: Zinc finger CCCH domain-containing protein 17 (669 aa).

The segment covering 1–11 has biased composition (low complexity); that stretch reads MFAPATQPQQQ. Positions 1–23 are disordered; the sequence is MFAPATQPQQQHEQKKQSETVSS. C3H1-type zinc fingers lie at residues 34 to 58, 60 to 86, and 114 to 141; these read DCVY…HSEY, RMNP…HPPL, and AKQP…HTPN. Disordered regions lie at residues 150-175, 285-306, 376-589, and 642-669; these read PVEA…EKKL, VEDR…PDFS, GMRL…VMEE, and EEGE…EMLS. Basic and acidic residues-rich tracts occupy residues 164–175, 285–299, 392–406, 420–464, 478–499, and 547–579; these read KPIENNTEEKKL, VEDR…RGNS, SMDR…DTPR, KLRE…EENH, RRRE…ESKP, and NNKD…PKAE. Acidic residues-rich tracts occupy residues 580-589 and 642-659; these read VEEEGTVMEE and EEGE…GEED. The span at 660 to 669 shows a compositional bias: basic and acidic residues; the sequence is IEKKTVEMLS.

The sequence is that of Zinc finger CCCH domain-containing protein 17 from Arabidopsis thaliana (Mouse-ear cress).